The primary structure comprises 599 residues: Aspartate--tRNA(Asp/Asn) ligase (599 aa).

Position 183 (E183) interacts with L-aspartate. Residues 207 to 210 form an aspartate region; that stretch reads QIFK. R229 is an L-aspartate binding site. ATP-binding positions include 229–231 and Q238; that span reads RDE. H456 contributes to the L-aspartate binding site. E490 is an ATP binding site. R497 provides a ligand contact to L-aspartate. 542-545 is a binding site for ATP; sequence GLDR.

This sequence belongs to the class-II aminoacyl-tRNA synthetase family. Type 1 subfamily. Homodimer.

The protein localises to the cytoplasm. It catalyses the reaction tRNA(Asx) + L-aspartate + ATP = L-aspartyl-tRNA(Asx) + AMP + diphosphate. Aspartyl-tRNA synthetase with relaxed tRNA specificity since it is able to aspartylate not only its cognate tRNA(Asp) but also tRNA(Asn). Reaction proceeds in two steps: L-aspartate is first activated by ATP to form Asp-AMP and then transferred to the acceptor end of tRNA(Asp/Asn). This chain is Aspartate--tRNA(Asp/Asn) ligase, found in Protochlamydia amoebophila (strain UWE25).